The chain runs to 148 residues: Putative fusion protein (148 aa).

Residues 1–34 form a disordered region; the sequence is MDRALSTFPGDDDETNERNINHREKTSGEHGHYE. A compositionally biased stretch (basic and acidic residues) spans 16-34; the sequence is NERNINHREKTSGEHGHYE.

This sequence belongs to the poxviruses fusion protein family. As to quaternary structure, homotrimer, covalently linked.

Its subcellular location is the virion membrane. The sequence is that of Putative fusion protein from Sheeppox virus (strain KS-1) (SPPV).